Reading from the N-terminus, the 134-residue chain is Small ribosomal subunit protein uS9 (134 aa).

Residues 114–134 (EVERKKYGLKKARRAPQFSKR) form a disordered region. Residues 120–134 (YGLKKARRAPQFSKR) are compositionally biased toward basic residues.

The protein belongs to the universal ribosomal protein uS9 family.

This chain is Small ribosomal subunit protein uS9, found in Thermotoga sp. (strain RQ2).